The primary structure comprises 332 residues: Holliday junction branch migration complex subunit RuvB (332 aa).

The interval 1 to 181 is large ATPase domain (RuvB-L); the sequence is MARILDNNVM…FGITGHMEYY (181 aa). ATP is bound by residues Leu20, Arg21, Gly62, Lys65, Thr66, Thr67, 128–130, Arg171, Tyr181, and Arg218; that span reads EDF. Thr66 is a Mg(2+) binding site. The interval 182–252 is small ATPAse domain (RuvB-S); sequence QEKDLTEIVE…ITDRALTMLD (71 aa). Positions 255-332 are head domain (RuvB-H); it reads REGLDYIDQK…RHLGYPYQNT (78 aa). Positions 291, 310, 312, and 315 each coordinate DNA.

It belongs to the RuvB family. Homohexamer. Forms an RuvA(8)-RuvB(12)-Holliday junction (HJ) complex. HJ DNA is sandwiched between 2 RuvA tetramers; dsDNA enters through RuvA and exits via RuvB. An RuvB hexamer assembles on each DNA strand where it exits the tetramer. Each RuvB hexamer is contacted by two RuvA subunits (via domain III) on 2 adjacent RuvB subunits; this complex drives branch migration. In the full resolvosome a probable DNA-RuvA(4)-RuvB(12)-RuvC(2) complex forms which resolves the HJ.

Its subcellular location is the cytoplasm. It catalyses the reaction ATP + H2O = ADP + phosphate + H(+). The RuvA-RuvB-RuvC complex processes Holliday junction (HJ) DNA during genetic recombination and DNA repair, while the RuvA-RuvB complex plays an important role in the rescue of blocked DNA replication forks via replication fork reversal (RFR). RuvA specifically binds to HJ cruciform DNA, conferring on it an open structure. The RuvB hexamer acts as an ATP-dependent pump, pulling dsDNA into and through the RuvAB complex. RuvB forms 2 homohexamers on either side of HJ DNA bound by 1 or 2 RuvA tetramers; 4 subunits per hexamer contact DNA at a time. Coordinated motions by a converter formed by DNA-disengaged RuvB subunits stimulates ATP hydrolysis and nucleotide exchange. Immobilization of the converter enables RuvB to convert the ATP-contained energy into a lever motion, pulling 2 nucleotides of DNA out of the RuvA tetramer per ATP hydrolyzed, thus driving DNA branch migration. The RuvB motors rotate together with the DNA substrate, which together with the progressing nucleotide cycle form the mechanistic basis for DNA recombination by continuous HJ branch migration. Branch migration allows RuvC to scan DNA until it finds its consensus sequence, where it cleaves and resolves cruciform DNA. This is Holliday junction branch migration complex subunit RuvB from Streptococcus pyogenes serotype M1.